A 126-amino-acid chain; its full sequence is Protein ApaG (126 aa).

The ApaG domain occupies 2–126; that stretch reads DISTPCIKCQ…FRLAIPNILN (125 aa).

This Vibrio atlanticus (strain LGP32) (Vibrio splendidus (strain Mel32)) protein is Protein ApaG.